We begin with the raw amino-acid sequence, 98 residues long: NADH-ubiquinone oxidoreductase chain 4L (98 aa).

The next 3 helical transmembrane spans lie at 1–21 (MSLI…GLLM), 29–49 (ALLC…LTIL), and 61–81 (IILL…LVMV).

It belongs to the complex I subunit 4L family. As to quaternary structure, core subunit of respiratory chain NADH dehydrogenase (Complex I) which is composed of 45 different subunits.

It is found in the mitochondrion inner membrane. It catalyses the reaction a ubiquinone + NADH + 5 H(+)(in) = a ubiquinol + NAD(+) + 4 H(+)(out). Functionally, core subunit of the mitochondrial membrane respiratory chain NADH dehydrogenase (Complex I) which catalyzes electron transfer from NADH through the respiratory chain, using ubiquinone as an electron acceptor. Part of the enzyme membrane arm which is embedded in the lipid bilayer and involved in proton translocation. The polypeptide is NADH-ubiquinone oxidoreductase chain 4L (MT-ND4L) (Phocoena phocoena (Harbor porpoise)).